A 431-amino-acid chain; its full sequence is Adenylosuccinate synthetase (431 aa).

Residues 13 to 19 (GDEGKGK) and 41 to 43 (GHT) contribute to the GTP site. The Proton acceptor role is filled by D14. Mg(2+)-binding residues include D14 and G41. IMP-binding positions include 14–17 (DEGK), 39–42 (NAGH), T130, R144, Q225, T240, and R304. Residue H42 is the Proton donor of the active site. A substrate-binding site is contributed by 300 to 306 (ATTGRKR). GTP is bound by residues R306, 332-334 (KLD), and 415-417 (STG).

The protein belongs to the adenylosuccinate synthetase family. In terms of assembly, homodimer. Requires Mg(2+) as cofactor.

Its subcellular location is the cytoplasm. It carries out the reaction IMP + L-aspartate + GTP = N(6)-(1,2-dicarboxyethyl)-AMP + GDP + phosphate + 2 H(+). It participates in purine metabolism; AMP biosynthesis via de novo pathway; AMP from IMP: step 1/2. Plays an important role in the de novo pathway of purine nucleotide biosynthesis. Catalyzes the first committed step in the biosynthesis of AMP from IMP. The polypeptide is Adenylosuccinate synthetase (Shewanella frigidimarina (strain NCIMB 400)).